The chain runs to 523 residues: Flavonoid 3',5'-hydroxylase (523 aa).

Residue cysteine 460 participates in heme binding.

Belongs to the cytochrome P450 family. Heme is required as a cofactor.

The catalysed reaction is a 3',5'-unsubstituted flavanone + 2 reduced [NADPH--hemoprotein reductase] + 2 O2 = a 3',5'-dihydroxyflavanone + 2 oxidized [NADPH--hemoprotein reductase] + 2 H2O + 2 H(+). Its pathway is pigment biosynthesis; anthocyanin biosynthesis. Functionally, catalyzes the 3'5'-hydroxylation of naringenin and eriodictyol to form 5,7,3,'4',5'-pentahydroxyflavanone and 3',5'-hydroxylation of dihydrokaempferol and dihydroquercetin to form dihydromyricetin. The polypeptide is Flavonoid 3',5'-hydroxylase (CYP75A6) (Campanula medium (Canterbury bells)).